A 109-amino-acid polypeptide reads, in one-letter code: Nucleoid-associated protein AHA_2212 (109 aa).

Disordered regions lie at residues 1–23 (MFGKGGMGNLMKQAQQMQERMQK) and 88–109 (NKSKMGELTGGMQLPPGFKMPF). The segment covering 11-23 (MKQAQQMQERMQK) has biased composition (low complexity).

It belongs to the YbaB/EbfC family. As to quaternary structure, homodimer.

It is found in the cytoplasm. Its subcellular location is the nucleoid. Its function is as follows. Binds to DNA and alters its conformation. May be involved in regulation of gene expression, nucleoid organization and DNA protection. The chain is Nucleoid-associated protein AHA_2212 from Aeromonas hydrophila subsp. hydrophila (strain ATCC 7966 / DSM 30187 / BCRC 13018 / CCUG 14551 / JCM 1027 / KCTC 2358 / NCIMB 9240 / NCTC 8049).